A 703-amino-acid chain; its full sequence is Glycine--tRNA ligase beta subunit (703 aa).

It belongs to the class-II aminoacyl-tRNA synthetase family. In terms of assembly, tetramer of two alpha and two beta subunits.

It localises to the cytoplasm. The catalysed reaction is tRNA(Gly) + glycine + ATP = glycyl-tRNA(Gly) + AMP + diphosphate. The polypeptide is Glycine--tRNA ligase beta subunit (Myxococcus xanthus (strain DK1622)).